The primary structure comprises 199 residues: RNA-free ribonuclease P (199 aa).

It belongs to the HARP family.

The catalysed reaction is Endonucleolytic cleavage of RNA, removing 5'-extranucleotides from tRNA precursor.. Its function is as follows. RNA-free RNase P that catalyzes the removal of the 5'-leader sequence from pre-tRNA to produce the mature 5'-terminus. The protein is RNA-free ribonuclease P of Thermococcus onnurineus (strain NA1).